A 144-amino-acid polypeptide reads, in one-letter code: L-fucose mutarotase (144 aa).

Residue histidine 22 is the Proton donor of the active site. Substrate contacts are provided by residues aspartate 30, arginine 109, and 131–133 (YGN).

Belongs to the RbsD / FucU family. FucU mutarotase subfamily. In terms of assembly, homodecamer.

The protein resides in the cytoplasm. It carries out the reaction alpha-L-fucose = beta-L-fucose. It participates in carbohydrate metabolism; L-fucose metabolism. Functionally, involved in the anomeric conversion of L-fucose. This is L-fucose mutarotase from Actinobacillus pleuropneumoniae serotype 5b (strain L20).